Consider the following 249-residue polypeptide: Triosephosphate isomerase (249 aa).

Asn9–Lys11 is a substrate binding site. The active-site Electrophile is the His94. The Proton acceptor role is filled by Glu166. Residues Gly172 and Gly232 to Gly233 contribute to the substrate site.

Belongs to the triosephosphate isomerase family. As to quaternary structure, homodimer.

The protein resides in the cytoplasm. It carries out the reaction D-glyceraldehyde 3-phosphate = dihydroxyacetone phosphate. Its pathway is carbohydrate biosynthesis; gluconeogenesis. The protein operates within carbohydrate degradation; glycolysis; D-glyceraldehyde 3-phosphate from glycerone phosphate: step 1/1. Its function is as follows. Involved in the gluconeogenesis. Catalyzes stereospecifically the conversion of dihydroxyacetone phosphate (DHAP) to D-glyceraldehyde-3-phosphate (G3P). This is Triosephosphate isomerase from Xylella fastidiosa (strain 9a5c).